Here is a 388-residue protein sequence, read N- to C-terminus: Succinate--CoA ligase [ADP-forming] subunit beta (388 aa).

The 237-residue stretch at 9-245 folds into the ATP-grasp domain; that stretch reads KALLKEYGMP…KSQENERELK (237 aa). Residues Lys-46, 53–55, Glu-100, Tyr-103, and Glu-108 each bind ATP; that span reads GRG. Mg(2+) is bound by residues Asn-200 and Asp-214. Substrate is bound by residues Asn-265 and 322-324; that span reads GIV.

The protein belongs to the succinate/malate CoA ligase beta subunit family. In terms of assembly, heterotetramer of two alpha and two beta subunits. Mg(2+) is required as a cofactor.

It catalyses the reaction succinate + ATP + CoA = succinyl-CoA + ADP + phosphate. It carries out the reaction GTP + succinate + CoA = succinyl-CoA + GDP + phosphate. The protein operates within carbohydrate metabolism; tricarboxylic acid cycle; succinate from succinyl-CoA (ligase route): step 1/1. Its function is as follows. Succinyl-CoA synthetase functions in the citric acid cycle (TCA), coupling the hydrolysis of succinyl-CoA to the synthesis of either ATP or GTP and thus represents the only step of substrate-level phosphorylation in the TCA. The beta subunit provides nucleotide specificity of the enzyme and binds the substrate succinate, while the binding sites for coenzyme A and phosphate are found in the alpha subunit. This Acinetobacter baumannii (strain AB307-0294) protein is Succinate--CoA ligase [ADP-forming] subunit beta.